The primary structure comprises 316 residues: Probable metal transport system membrane protein TC_0342 (316 aa).

The next 10 membrane-spanning stretches (helical) occupy residues 1 to 21 (MFAS…IVFF), 39 to 59 (IQVI…TFLV), 64 to 84 (AMYA…ACLF), 94 to 114 (QNLT…IHFI), 124 to 144 (ASTA…LVFL), 171 to 191 (FLVL…FICV), 196 to 216 (VFAF…MFLL), 226 to 246 (AVGV…AKLI), 252 to 272 (EMMG…PALS), and 286 to 306 (SGLA…TVFV).

Belongs to the ABC-3 integral membrane protein family.

The protein resides in the cell inner membrane. Functionally, part of an ATP-driven transport system TC_0338/TC_0339/TC_0341/TC_0342 for a metal. In Chlamydia muridarum (strain MoPn / Nigg), this protein is Probable metal transport system membrane protein TC_0342.